The primary structure comprises 343 residues: N-acetyl-gamma-glutamyl-phosphate reductase (343 aa).

Residue Cys-147 is part of the active site.

The protein belongs to the NAGSA dehydrogenase family. Type 1 subfamily.

Its subcellular location is the cytoplasm. It carries out the reaction N-acetyl-L-glutamate 5-semialdehyde + phosphate + NADP(+) = N-acetyl-L-glutamyl 5-phosphate + NADPH + H(+). It functions in the pathway amino-acid biosynthesis; L-arginine biosynthesis; N(2)-acetyl-L-ornithine from L-glutamate: step 3/4. Its function is as follows. Catalyzes the NADPH-dependent reduction of N-acetyl-5-glutamyl phosphate to yield N-acetyl-L-glutamate 5-semialdehyde. The chain is N-acetyl-gamma-glutamyl-phosphate reductase from Staphylococcus aureus (strain USA300).